Consider the following 314-residue polypeptide: Nodulation protein D 1 (314 aa).

Positions 6–63 (LDLNLLVALDAVMTARNLTAAARKINLSQPAMSAAIARLRTYFRDELFTMRGRELVPT) constitute an HTH lysR-type domain. Positions 23–42 (LTAAARKINLSQPAMSAAIA) form a DNA-binding region, H-T-H motif.

It belongs to the LysR transcriptional regulatory family.

NodD regulates the expression of the nodABCFE genes which encode other nodulation proteins. NodD is also a negative regulator of its own expression. Binds flavonoids as inducers. This chain is Nodulation protein D 1 (nodD1), found in Bradyrhizobium diazoefficiens (strain JCM 10833 / BCRC 13528 / IAM 13628 / NBRC 14792 / USDA 110).